The primary structure comprises 477 residues: Mitochondrial adenyl nucleotide antiporter SLC25A24 (477 aa).

The interval 1 to 174 is regulatory N-terminal domain; sequence MHQLIRKFVF…RYWKKSTVLD (174 aa). Residues 1–198 lie on the Mitochondrial intermembrane side of the membrane; the sequence is MHQLIRKFVF…EKTTGMWWKQ (198 aa). The region spanning 20-55 is the EF-hand 1 domain; sequence DNTKSFAELFEKLDVNKDGKVDVSELKTGLAAMGFS. 19 residues coordinate Ca(2+): aspartate 33, asparagine 35, aspartate 37, lysine 39, glutamate 44, aspartate 69, aspartate 71, aspartate 73, glutamate 80, aspartate 100, asparagine 102, aspartate 104, arginine 106, glutamate 111, aspartate 136, aspartate 138, threonine 140, threonine 142, and glutamate 147. EF-hand domains lie at 87–122 and 123–158; these read EHEK…LGIN and LSDK…NPAE. The tract at residues 160 to 169 is linker region; the sequence is LQQIIRYWKK. Positions 175 to 477 are C-terminal transmembrane transporter domain; the sequence is IGDSLTIPDE…YMRSGLGISK (303 aa). 3 Solcar repeats span residues 193-279, 287-372, and 384-472; these read GMWW…YKKL, VQSH…LKNT, and PGVL…MRSG. A helical transmembrane segment spans residues 199–216; it reads LAAGGVAGAVSRTGTAPL. Residues 217-253 are Mitochondrial matrix-facing; the sequence is DRMKVFMQVHSSKTNKISLVNGFKQMIKEGGVASLWR. Residues 254 to 273 form a helical membrane-spanning segment; sequence GNGVNVIKIAPETAIKFMAY. Residues 274-296 lie on the Mitochondrial intermembrane side of the membrane; sequence EQYKKLLSKDGGKVQSHERFMAG. A helical transmembrane segment spans residues 297 to 310; it reads SLAGATAQTAIYPM. At 311-346 the chain is on the mitochondrial matrix side; the sequence is EVMKTRLTLRKTGQYSGMFDCAKKILRKEGVKAFYK. The chain crosses the membrane as a helical span at residues 347 to 366; sequence GYVPNILGIIPYAGIDLAVY. Residues 367 to 389 lie on the Mitochondrial intermembrane side of the membrane; it reads ETLKNTWLSHYAKDTANPGVLVL. Residues 390–407 form a helical membrane-spanning segment; that stretch reads LGCGTISSTCGQLASYPL. Residues 408 to 446 are Mitochondrial matrix-facing; it reads ALIRTRMQAMASMEGSEQVSMSKLVKKIMQKEGFFGLYR. A helical transmembrane segment spans residues 447–466; sequence GILPNFMKVIPAVSISYVVY. The Mitochondrial intermembrane segment spans residues 467-477; that stretch reads EYMRSGLGISK.

This sequence belongs to the mitochondrial carrier (TC 2.A.29) family. In terms of assembly, monomer.

It is found in the mitochondrion inner membrane. It catalyses the reaction Mg(2+)(out) + phosphate(in) + ATP(out) = Mg(2+)(in) + phosphate(out) + ATP(in). The catalysed reaction is ADP(out) + phosphate(in) + H(+)(out) = ADP(in) + phosphate(out) + H(+)(in). The enzyme catalyses AMP(out) + phosphate(in) = AMP(in) + phosphate(out). It carries out the reaction phosphate(in) + ATP(out) + 2 H(+)(out) = phosphate(out) + ATP(in) + 2 H(+)(in). It catalyses the reaction dADP(in) + ADP(out) = dADP(out) + ADP(in). The catalysed reaction is Mg(2+)(in) + ADP(out) + ATP(in) + H(+)(out) = Mg(2+)(out) + ADP(in) + ATP(out) + H(+)(in). The enzyme catalyses ADP(out) + diphosphate(in) = ADP(in) + diphosphate(out). It carries out the reaction dAMP(in) + ADP(out) + H(+)(out) = dAMP(out) + ADP(in) + H(+)(in). It catalyses the reaction 3'-AMP(in) + ADP(out) + H(+)(out) = 3'-AMP(out) + ADP(in) + H(+)(in). The catalysed reaction is dAMP(out) + phosphate(in) = dAMP(in) + phosphate(out). The enzyme catalyses 3'-AMP(out) + phosphate(in) = 3'-AMP(in) + phosphate(out). It carries out the reaction dADP(out) + phosphate(in) + H(+)(out) = dADP(in) + phosphate(out) + H(+)(in). Activated by an increase in cytosolic calcium levels that induce a conformational change of the N-terminal regulatory domain, uncapping the channel and allowing transport. Inhibited by bathophenanthroline, mersalyl, p-hydroxymercuribenzoate, bromcresol purple and tannic acid. In terms of biological role, electroneutral antiporter that mediates the transport of adenyl nucleotides through the inner mitochondrial membrane. Originally identified as an ATP-magnesium/inorganic phosphate antiporter, it also acts as a broad specificity adenyl nucleotide antiporter. By regulating the mitochondrial matrix adenyl nucleotide pool could adapt to changing cellular energetic demands and indirectly regulate adenyl nucleotide-dependent metabolic pathways. The protein is Mitochondrial adenyl nucleotide antiporter SLC25A24 (slc25a24) of Danio rerio (Zebrafish).